Reading from the N-terminus, the 680-residue chain is 1-deoxy-D-xylulose-5-phosphate synthase (680 aa).

The segment covering 1-17 has biased composition (low complexity); the sequence is MQQSPHSPQSQSLSASA. The segment at 1–20 is disordered; that stretch reads MQQSPHSPQSQSLSASAVDS. Thiamine diphosphate contacts are provided by residues histidine 113 and 154–156; that span reads GHS. Residue aspartate 185 participates in Mg(2+) binding. Residues 186–187, asparagine 214, phenylalanine 323, and glutamate 408 each bind thiamine diphosphate; that span reads GA. Mg(2+) is bound at residue asparagine 214.

It belongs to the transketolase family. DXPS subfamily. As to quaternary structure, homodimer. Mg(2+) serves as cofactor. Thiamine diphosphate is required as a cofactor.

The enzyme catalyses D-glyceraldehyde 3-phosphate + pyruvate + H(+) = 1-deoxy-D-xylulose 5-phosphate + CO2. It functions in the pathway metabolic intermediate biosynthesis; 1-deoxy-D-xylulose 5-phosphate biosynthesis; 1-deoxy-D-xylulose 5-phosphate from D-glyceraldehyde 3-phosphate and pyruvate: step 1/1. Functionally, catalyzes the acyloin condensation reaction between C atoms 2 and 3 of pyruvate and glyceraldehyde 3-phosphate to yield 1-deoxy-D-xylulose-5-phosphate (DXP). In Psychrobacter cryohalolentis (strain ATCC BAA-1226 / DSM 17306 / VKM B-2378 / K5), this protein is 1-deoxy-D-xylulose-5-phosphate synthase.